We begin with the raw amino-acid sequence, 248 residues long: Triosephosphate isomerase (248 aa).

Residue 9–11 (NWK) coordinates substrate. Catalysis depends on H94, which acts as the Electrophile. E166 (proton acceptor) is an active-site residue. Residues G172, S212, and 233–234 (GG) each bind substrate.

This sequence belongs to the triosephosphate isomerase family. As to quaternary structure, homodimer.

It localises to the cytoplasm. The enzyme catalyses D-glyceraldehyde 3-phosphate = dihydroxyacetone phosphate. The protein operates within carbohydrate biosynthesis; gluconeogenesis. It participates in carbohydrate degradation; glycolysis; D-glyceraldehyde 3-phosphate from glycerone phosphate: step 1/1. Its function is as follows. Involved in the gluconeogenesis. Catalyzes stereospecifically the conversion of dihydroxyacetone phosphate (DHAP) to D-glyceraldehyde-3-phosphate (G3P). This chain is Triosephosphate isomerase, found in Alkaliphilus metalliredigens (strain QYMF).